A 172-amino-acid chain; its full sequence is Small ribosomal subunit protein uS5 (172 aa).

The S5 DRBM domain maps to 15–78 (YIEKLVNIRR…DKARKRMKSV (64 aa)).

The protein belongs to the universal ribosomal protein uS5 family. As to quaternary structure, part of the 30S ribosomal subunit. Contacts proteins S4 and S8.

Its function is as follows. With S4 and S12 plays an important role in translational accuracy. Functionally, located at the back of the 30S subunit body where it stabilizes the conformation of the head with respect to the body. The chain is Small ribosomal subunit protein uS5 from Ruthia magnifica subsp. Calyptogena magnifica.